We begin with the raw amino-acid sequence, 1330 residues long: ESX-3 secretion system protein EccC3 (1330 aa).

Transmembrane regions (helical) follow at residues 43-63 (LPYL…ATGM) and 65-85 (VISP…TALY). 3 consecutive FtsK domains span residues 456–662 (GEPL…SVSR), 811–1000 (RDPL…RDSN), and 1090–1280 (LAPV…ADSG). Residues 479 to 486 (GMTGSGKS), 829 to 836 (GGPKSGKS), and 1107 to 1114 (GDARSGKT) contribute to the ATP site.

In terms of assembly, part of the ESX-3 / type VII secretion system (T7SS), which is composed of cytosolic and membrane components. The ESX-3 membrane complex is composed of EccB3, EccC3, EccD3 and EccE3.

It is found in the cell inner membrane. Part of the ESX-3 specialized secretion system, which is important for iron and zinc uptake or homeostasis. The sequence is that of ESX-3 secretion system protein EccC3 from Mycobacterium tuberculosis (strain ATCC 25618 / H37Rv).